The chain runs to 196 residues: 3-isopropylmalate dehydratase small subunit (196 aa).

This sequence belongs to the LeuD family. LeuD type 1 subfamily. Heterodimer of LeuC and LeuD.

It catalyses the reaction (2R,3S)-3-isopropylmalate = (2S)-2-isopropylmalate. The protein operates within amino-acid biosynthesis; L-leucine biosynthesis; L-leucine from 3-methyl-2-oxobutanoate: step 2/4. Its function is as follows. Catalyzes the isomerization between 2-isopropylmalate and 3-isopropylmalate, via the formation of 2-isopropylmaleate. The sequence is that of 3-isopropylmalate dehydratase small subunit from Streptococcus gordonii (strain Challis / ATCC 35105 / BCRC 15272 / CH1 / DL1 / V288).